Here is a 193-residue protein sequence, read N- to C-terminus: Holliday junction branch migration complex subunit RuvA (193 aa).

The segment at 1–64 (MIGRIQGTLV…EDAQQLFGFA (64 aa)) is domain I. The segment at 65–139 (TEIEREAFRQ…GKLAPDLGIT (75 aa)) is domain II. Residues 139–143 (TGGKP) form a flexible linker region. Residues 144 to 193 (QAIEATSEVLQALLSLGYSEKEALLALKQIPPETSVSDGIRMGLKYLSKP) are domain III.

Belongs to the RuvA family. In terms of assembly, homotetramer. Forms an RuvA(8)-RuvB(12)-Holliday junction (HJ) complex. HJ DNA is sandwiched between 2 RuvA tetramers; dsDNA enters through RuvA and exits via RuvB. An RuvB hexamer assembles on each DNA strand where it exits the tetramer. Each RuvB hexamer is contacted by two RuvA subunits (via domain III) on 2 adjacent RuvB subunits; this complex drives branch migration. In the full resolvosome a probable DNA-RuvA(4)-RuvB(12)-RuvC(2) complex forms which resolves the HJ.

It localises to the cytoplasm. Functionally, the RuvA-RuvB-RuvC complex processes Holliday junction (HJ) DNA during genetic recombination and DNA repair, while the RuvA-RuvB complex plays an important role in the rescue of blocked DNA replication forks via replication fork reversal (RFR). RuvA specifically binds to HJ cruciform DNA, conferring on it an open structure. The RuvB hexamer acts as an ATP-dependent pump, pulling dsDNA into and through the RuvAB complex. HJ branch migration allows RuvC to scan DNA until it finds its consensus sequence, where it cleaves and resolves the cruciform DNA. The polypeptide is Holliday junction branch migration complex subunit RuvA (Polynucleobacter asymbioticus (strain DSM 18221 / CIP 109841 / QLW-P1DMWA-1) (Polynucleobacter necessarius subsp. asymbioticus)).